Reading from the N-terminus, the 227-residue chain is Adenylate kinase (227 aa).

21 to 26 contacts ATP; that stretch reads GAGKGT. Residues 41–70 form an NMP region; the sequence is ATGDMLRSQVAKQTPLGIEAKKIMDDGKLV. AMP contacts are provided by residues T42, R47, 68–70, 97–100, and Q104; these read KLV and GFPR. The segment at 138–175 is LID; it reads GRLVHPASGRSYHKVFNPPKTEMKDDITGEDLVQRSDD. ATP-binding positions include R139 and 148 to 149; that span reads SY. AMP-binding residues include R172 and R183. Residue Q211 participates in ATP binding.

It belongs to the adenylate kinase family. AK2 subfamily. As to quaternary structure, monomer.

It localises to the cytoplasm. Its subcellular location is the cytosol. It is found in the mitochondrion intermembrane space. It carries out the reaction AMP + ATP = 2 ADP. Catalyzes the reversible transfer of the terminal phosphate group between ATP and AMP. Plays an important role in cellular energy homeostasis and in adenine nucleotide metabolism. Adenylate kinase activity is critical for regulation of the phosphate utilization and the AMP de novo biosynthesis pathways. In Kluyveromyces lactis (strain ATCC 8585 / CBS 2359 / DSM 70799 / NBRC 1267 / NRRL Y-1140 / WM37) (Yeast), this protein is Adenylate kinase.